The sequence spans 921 residues: Eukaryotic translation initiation factor 3 subunit A (921 aa).

Residues 319–493 enclose the PCI domain; sequence FKFYASQLVL…GVVSFMEDPF (175 aa). Residues 497-524 form a disordered region; the sequence is GGSTATNADDEQRNDDGYEETHVEEEPE. The span at 506–517 shows a compositional bias: basic and acidic residues; sequence DEQRNDDGYEET. Coiled coils occupy residues 562-647 and 693-868; these read ARNE…NEKT and ERMS…IKRN. Residues 818-865 are compositionally biased toward basic and acidic residues; the sequence is AAKEHDDRQRMLQDRLTKERKERERVNKEKDEAARKQREIEEAVERTI. The interval 818 to 921 is disordered; it reads AAKEHDDRQR…KMKLRRAGRA (104 aa). The span at 873–890 shows a compositional bias: pro residues; the sequence is PAPPVRSAPPARAAPPPR. Basic and acidic residues predominate over residues 903-913; the sequence is PEKKLTYAEKM.

The protein belongs to the eIF-3 subunit A family. Component of the eukaryotic translation initiation factor 3 (eIF-3) complex.

The protein resides in the cytoplasm. In terms of biological role, RNA-binding component of the eukaryotic translation initiation factor 3 (eIF-3) complex, which is involved in protein synthesis of a specialized repertoire of mRNAs and, together with other initiation factors, stimulates binding of mRNA and methionyl-tRNAi to the 40S ribosome. The eIF-3 complex specifically targets and initiates translation of a subset of mRNAs involved in cell proliferation. This chain is Eukaryotic translation initiation factor 3 subunit A, found in Eremothecium gossypii (strain ATCC 10895 / CBS 109.51 / FGSC 9923 / NRRL Y-1056) (Yeast).